We begin with the raw amino-acid sequence, 455 residues long: GTPase Der (455 aa).

EngA-type G domains lie at 4–169 and 178–353; these read PVVA…PPKD and IQMA…EQHR. GTP is bound by residues 10-17, 57-61, 120-123, 184-191, 231-235, and 296-299; these read GRPNVGKS, DTGGL, NKCE, DTAGI, and NKWD. In terms of domain architecture, KH-like spans 354 to 439; the sequence is RRVSTSVVNE…PLRLFWRGKQ (86 aa).

Belongs to the TRAFAC class TrmE-Era-EngA-EngB-Septin-like GTPase superfamily. EngA (Der) GTPase family. In terms of assembly, associates with the 50S ribosomal subunit.

Its function is as follows. GTPase that plays an essential role in the late steps of ribosome biogenesis. This is GTPase Der from Synechococcus sp. (strain CC9605).